We begin with the raw amino-acid sequence, 214 residues long: MQHNKILIRQLGLQPYEPVSQAMHEFTDARDEDTLDEIWLVEHHPVFTQGQAGKAEHVLVPGDIPVIQSDRGGQVTYHGPGQQVMYVLLDLKRRKLGVRELVTLLEQTVVNTLAEYSIESHPRADAPGVYVGERKICSLGLRIRKGCSFHGLALNIAMDLTPFLRINPCGYAGMEMTQMRQWQPAASPETVAPRLVANLLALLNHPPHEYLPRD.

The BPL/LPL catalytic domain maps to Glu32–Pro207. Substrate-binding positions include Arg71 to His78, Ser138 to Gly140, and Gly151 to Ala153. Residue Cys169 is the Acyl-thioester intermediate of the active site.

Belongs to the LipB family.

The protein localises to the cytoplasm. The enzyme catalyses octanoyl-[ACP] + L-lysyl-[protein] = N(6)-octanoyl-L-lysyl-[protein] + holo-[ACP] + H(+). Its pathway is protein modification; protein lipoylation via endogenous pathway; protein N(6)-(lipoyl)lysine from octanoyl-[acyl-carrier-protein]: step 1/2. Catalyzes the transfer of endogenously produced octanoic acid from octanoyl-acyl-carrier-protein onto the lipoyl domains of lipoate-dependent enzymes. Lipoyl-ACP can also act as a substrate although octanoyl-ACP is likely to be the physiological substrate. In Klebsiella pneumoniae subsp. pneumoniae (strain ATCC 700721 / MGH 78578), this protein is Octanoyltransferase.